The primary structure comprises 377 residues: MSDVLDLACDLISRPSMTPDDAGCQEMIAKRLERAGFICEHLRYAAVSNLWATHGRGAPVLVLLGHTDVVPPGPVEAWTSDPFMPDMRNGILYGRGAADMKGSVAAFVIAAERFLAAYPQHPGTLAILLTSDEEGQAIDGVRKVAETLRQRGQGIDWCLTGEPSSSKRLGDLLRVGRRGSLSATLHVKGVQGHVAYPHQARNPIHLALPAFAALTARHWDDGYESFPSTSLQISNIHAGTGANNVIPGALEVAFNLRYNPHWIAPRLESEIVALLDQHGLDYTLHWHRSGEPFYTPEGKLRRIAREVLERFSGAPPEESTGGGTSDARFIAPLGAQCIEVGPVNASIHQVDEHVCLSDLEALPDLYQLLIERLLAEH.

Position 66 (His-66) interacts with Zn(2+). Asp-68 is a catalytic residue. Asp-99 contacts Zn(2+). Glu-133 acts as the Proton acceptor in catalysis. The Zn(2+) site is built by Glu-134, Glu-162, and His-348.

This sequence belongs to the peptidase M20A family. DapE subfamily. As to quaternary structure, homodimer. It depends on Zn(2+) as a cofactor. Co(2+) is required as a cofactor.

The catalysed reaction is N-succinyl-(2S,6S)-2,6-diaminopimelate + H2O = (2S,6S)-2,6-diaminopimelate + succinate. It functions in the pathway amino-acid biosynthesis; L-lysine biosynthesis via DAP pathway; LL-2,6-diaminopimelate from (S)-tetrahydrodipicolinate (succinylase route): step 3/3. Catalyzes the hydrolysis of N-succinyl-L,L-diaminopimelic acid (SDAP), forming succinate and LL-2,6-diaminopimelate (DAP), an intermediate involved in the bacterial biosynthesis of lysine and meso-diaminopimelic acid, an essential component of bacterial cell walls. The polypeptide is Succinyl-diaminopimelate desuccinylase (Xylella fastidiosa (strain M23)).